Here is a 357-residue protein sequence, read N- to C-terminus: Protein RecA (357 aa).

An ATP-binding site is contributed by 67-74; it reads GPESSGKT. The interval 333-357 is disordered; sequence NELTPATAGNSHDEDAFADEGNEEF. Positions 348 to 357 are enriched in acidic residues; the sequence is AFADEGNEEF.

This sequence belongs to the RecA family.

It localises to the cytoplasm. Its function is as follows. Can catalyze the hydrolysis of ATP in the presence of single-stranded DNA, the ATP-dependent uptake of single-stranded DNA by duplex DNA, and the ATP-dependent hybridization of homologous single-stranded DNAs. It interacts with LexA causing its activation and leading to its autocatalytic cleavage. This chain is Protein RecA, found in Pectobacterium carotovorum subsp. carotovorum (strain PC1).